The primary structure comprises 383 residues: tRNA(Met) cytidine acetate ligase (383 aa).

Residues 7 to 20 (ITEY…HRYH), glycine 101, asparagine 150, and arginine 175 each bind ATP.

This sequence belongs to the TmcAL family.

The protein localises to the cytoplasm. It catalyses the reaction cytidine(34) in elongator tRNA(Met) + acetate + ATP = N(4)-acetylcytidine(34) in elongator tRNA(Met) + AMP + diphosphate. Catalyzes the formation of N(4)-acetylcytidine (ac(4)C) at the wobble position of elongator tRNA(Met), using acetate and ATP as substrates. First activates an acetate ion to form acetyladenylate (Ac-AMP) and then transfers the acetyl group to tRNA to form ac(4)C34. The sequence is that of tRNA(Met) cytidine acetate ligase from Lactiplantibacillus plantarum (strain ATCC BAA-793 / NCIMB 8826 / WCFS1) (Lactobacillus plantarum).